Consider the following 557-residue polypeptide: 2-succinyl-5-enolpyruvyl-6-hydroxy-3-cyclohexene-1-carboxylate synthase (557 aa).

Belongs to the TPP enzyme family. MenD subfamily. As to quaternary structure, homodimer. Mg(2+) is required as a cofactor. Mn(2+) serves as cofactor. It depends on thiamine diphosphate as a cofactor.

The catalysed reaction is isochorismate + 2-oxoglutarate + H(+) = 5-enolpyruvoyl-6-hydroxy-2-succinyl-cyclohex-3-ene-1-carboxylate + CO2. Its pathway is quinol/quinone metabolism; 1,4-dihydroxy-2-naphthoate biosynthesis; 1,4-dihydroxy-2-naphthoate from chorismate: step 2/7. It functions in the pathway quinol/quinone metabolism; menaquinone biosynthesis. Catalyzes the thiamine diphosphate-dependent decarboxylation of 2-oxoglutarate and the subsequent addition of the resulting succinic semialdehyde-thiamine pyrophosphate anion to isochorismate to yield 2-succinyl-5-enolpyruvyl-6-hydroxy-3-cyclohexene-1-carboxylate (SEPHCHC). This is 2-succinyl-5-enolpyruvyl-6-hydroxy-3-cyclohexene-1-carboxylate synthase from Yersinia enterocolitica serotype O:8 / biotype 1B (strain NCTC 13174 / 8081).